Reading from the N-terminus, the 1333-residue chain is snRNA-activating protein complex subunit 4 (1333 aa).

Residues 29–84 (HFEVSESSLSSDSEADSLPDEDLETAGAPILEEEGSSESSNDEEDPKDKALPEDPE) are disordered. 2 stretches are compositionally biased toward acidic residues: residues 41–52 (SEADSLPDEDLE) and 59–73 (LEEEGSSESSNDEED). Phosphoserine is present on serine 68. An SNAPC5-binding region spans residues 84–133 (ETCLQLNMVYQEVIREKLAEVSQLLAQNQEQQEEILFDLSGTKCPKVKDG). The region spanning 250-288 (EEALLGNRLDSHDWEKISNINFEGARSAEEIRKFWQSSE) is the Myb-like 1 domain. The HTH myb-type 1 domain maps to 289 to 343 (HPSISKQEWSTEEVERLKAIAATHGHLEWHLVAEELGTSRSAFQCLQKFQQYNKT). Positions 317–341 (WHLVAEELGTSRSAFQCLQKFQQYN) form a DNA-binding region, H-T-H motif. Residues 344-395 (LKRKEWTEEEDHMLTQLVQEMRVGNHIPYRKIVYFMEGRDSMQLIYRWTKSL) enclose the Myb-like 2 domain. HTH myb-type domains follow at residues 396-451 (DPSL…HFSL) and 452-503 (KKGR…RKKQ). 2 DNA-binding regions (H-T-H motif) span residues 424 to 447 (WFKIREEVPGRSDAQCRDRYIRRL) and 476 to 499 (WARIASELPHRSGSQCLSKWKILA). A compositionally biased stretch (basic residues) spans 503–515 (QHLQRKRGQRPRH). Disordered stretches follow at residues 503–558 (QHLQ…LEKS), 662–702 (LMKE…QNKQ), 811–842 (NAKNNTGCLPSMTGEQTAKRASHKGRPRLGSC), and 1079–1117 (LPSPAKTPAFLEQPPASTDTEPKGPQGQEIPPTPGPEKA). The span at 516 to 546 (SSQWSSSGSSSSSSEDYGSSSGSDGSSGSEN) shows a compositional bias: low complexity. Composition is skewed to polar residues over residues 672–686 (LPSSRSGSDPGNNTA) and 811–826 (NAKNNTGCLPSMTGEQ). Residues 1131 to 1247 (AIVTWLKGCQ…NSIPTTLSPD (117 aa)) form an SNAPC2-binding region. Residues serine 1252, serine 1254, serine 1301, and serine 1309 each carry the phosphoserine modification. The segment at 1282–1333 (PAAPDPVQSHLVSPGQRAPSPGEVSAPSPLDASDGLDDLNVLRTRRARHSRR) is disordered. Residues 1324-1333 (RTRRARHSRR) show a composition bias toward basic residues.

As to quaternary structure, part of the SNAPc composed of 5 subunits: SNAPC1, SNAPC2, SNAPC3, SNAPC4 and SNAPC5. SNAPC4 interacts with SNAPC1, SNAPC2, SNAPC5, BRF2 and TBP.

It is found in the nucleus. Part of the SNAPc complex required for the transcription of both RNA polymerase II and III small-nuclear RNA genes. Binds to the proximal sequence element (PSE), a non-TATA-box basal promoter element common to these 2 types of genes. Recruits TBP and BRF2 to the U6 snRNA TATA box. In Mus musculus (Mouse), this protein is snRNA-activating protein complex subunit 4.